Reading from the N-terminus, the 437-residue chain is 23S rRNA (uracil(1939)-C(5))-methyltransferase RlmD (437 aa).

The region spanning 10–68 (SAPRNTTFVAEILDLDYQGRGVAKVQGKTWFIENALPQEKVEVRIVDEKRHYGHGISCK) is the TRAM domain. Residues Cys-81, Cys-87, Cys-90, and Cys-167 each contribute to the [4Fe-4S] cluster site. Residues Gln-270, Phe-299, Asn-304, Glu-320, Asn-347, and Asp-368 each coordinate S-adenosyl-L-methionine. The active-site Nucleophile is Cys-394.

It belongs to the class I-like SAM-binding methyltransferase superfamily. RNA M5U methyltransferase family. RlmD subfamily.

The enzyme catalyses uridine(1939) in 23S rRNA + S-adenosyl-L-methionine = 5-methyluridine(1939) in 23S rRNA + S-adenosyl-L-homocysteine + H(+). Catalyzes the formation of 5-methyl-uridine at position 1939 (m5U1939) in 23S rRNA. This chain is 23S rRNA (uracil(1939)-C(5))-methyltransferase RlmD, found in Pasteurella multocida (strain Pm70).